The following is a 271-amino-acid chain: Acetyl-coenzyme A carboxylase carboxyl transferase subunit alpha (271 aa).

One can recognise a CoA carboxyltransferase C-terminal domain in the interval 1-247 (MSRELIRTVD…KKTILEALGE (247 aa)).

It belongs to the AccA family. As to quaternary structure, acetyl-CoA carboxylase is a heterohexamer composed of biotin carboxyl carrier protein (AccB), biotin carboxylase (AccC) and two subunits each of ACCase subunit alpha (AccA) and ACCase subunit beta (AccD).

The protein localises to the cytoplasm. The catalysed reaction is N(6)-carboxybiotinyl-L-lysyl-[protein] + acetyl-CoA = N(6)-biotinyl-L-lysyl-[protein] + malonyl-CoA. It participates in lipid metabolism; malonyl-CoA biosynthesis; malonyl-CoA from acetyl-CoA: step 1/1. Functionally, component of the acetyl coenzyme A carboxylase (ACC) complex. First, biotin carboxylase catalyzes the carboxylation of biotin on its carrier protein (BCCP) and then the CO(2) group is transferred by the carboxyltransferase to acetyl-CoA to form malonyl-CoA. This Clostridium perfringens (strain SM101 / Type A) protein is Acetyl-coenzyme A carboxylase carboxyl transferase subunit alpha.